We begin with the raw amino-acid sequence, 342 residues long: Ketol-acid reductoisomerase (NADP(+)) (342 aa).

A KARI N-terminal Rossmann domain is found at 2–181; the sequence is VKVYYNGDIQ…GGARAGVLET (180 aa). Residues 25 to 28, arginine 48, serine 52, and 82 to 85 contribute to the NADP(+) site; these read YGSQ and DEQQ. Residue histidine 107 is part of the active site. Glycine 133 contributes to the NADP(+) binding site. In terms of domain architecture, KARI C-terminal knotted spans 182–327; sequence TFKEETETDL…RKLREMMPFV (146 aa). Positions 190, 194, 226, and 230 each coordinate Mg(2+). Serine 251 lines the substrate pocket.

It belongs to the ketol-acid reductoisomerase family. It depends on Mg(2+) as a cofactor.

It catalyses the reaction (2R)-2,3-dihydroxy-3-methylbutanoate + NADP(+) = (2S)-2-acetolactate + NADPH + H(+). It carries out the reaction (2R,3R)-2,3-dihydroxy-3-methylpentanoate + NADP(+) = (S)-2-ethyl-2-hydroxy-3-oxobutanoate + NADPH + H(+). The protein operates within amino-acid biosynthesis; L-isoleucine biosynthesis; L-isoleucine from 2-oxobutanoate: step 2/4. It participates in amino-acid biosynthesis; L-valine biosynthesis; L-valine from pyruvate: step 2/4. Its function is as follows. Involved in the biosynthesis of branched-chain amino acids (BCAA). Catalyzes an alkyl-migration followed by a ketol-acid reduction of (S)-2-acetolactate (S2AL) to yield (R)-2,3-dihydroxy-isovalerate. In the isomerase reaction, S2AL is rearranged via a Mg-dependent methyl migration to produce 3-hydroxy-3-methyl-2-ketobutyrate (HMKB). In the reductase reaction, this 2-ketoacid undergoes a metal-dependent reduction by NADPH to yield (R)-2,3-dihydroxy-isovalerate. The chain is Ketol-acid reductoisomerase (NADP(+)) from Bacillus pumilus (strain SAFR-032).